Reading from the N-terminus, the 184-residue chain is Large ribosomal subunit protein uL6 (184 aa).

Belongs to the universal ribosomal protein uL6 family. Part of the 50S ribosomal subunit.

This protein binds to the 23S rRNA, and is important in its secondary structure. It is located near the subunit interface in the base of the L7/L12 stalk, and near the tRNA binding site of the peptidyltransferase center. This Thermotoga neapolitana (strain ATCC 49049 / DSM 4359 / NBRC 107923 / NS-E) protein is Large ribosomal subunit protein uL6.